The following is a 310-amino-acid chain: Beta-ketoacyl-[acyl-carrier-protein] synthase III 1 (310 aa).

Catalysis depends on residues Cys-112 and His-235. Residues 236–240 form an ACP-binding region; the sequence is QANIR. Asn-265 is a catalytic residue.

Belongs to the thiolase-like superfamily. FabH family. In terms of assembly, homodimer.

It is found in the cytoplasm. The enzyme catalyses malonyl-[ACP] + acetyl-CoA + H(+) = 3-oxobutanoyl-[ACP] + CO2 + CoA. It functions in the pathway lipid metabolism; fatty acid biosynthesis. In terms of biological role, catalyzes the condensation reaction of fatty acid synthesis by the addition to an acyl acceptor of two carbons from malonyl-ACP. Catalyzes the first condensation reaction which initiates fatty acid synthesis and may therefore play a role in governing the total rate of fatty acid production. Possesses both acetoacetyl-ACP synthase and acetyl transacylase activities. Its substrate specificity determines the biosynthesis of branched-chain and/or straight-chain of fatty acids. The protein is Beta-ketoacyl-[acyl-carrier-protein] synthase III 1 of Bacillus anthracis.